The sequence spans 306 residues: Acetyl-coenzyme A carboxylase carboxyl transferase subunit beta (306 aa).

Positions L25 to K294 constitute a CoA carboxyltransferase N-terminal domain. Residues E287–A306 form a disordered region. Over residues K294–A306 the composition is skewed to polar residues.

It belongs to the AccD/PCCB family. In terms of assembly, acetyl-CoA carboxylase is a heterohexamer composed of biotin carboxyl carrier protein (AccB), biotin carboxylase (AccC) and two subunits each of ACCase subunit alpha (AccA) and ACCase subunit beta (AccD).

The protein localises to the cytoplasm. It catalyses the reaction N(6)-carboxybiotinyl-L-lysyl-[protein] + acetyl-CoA = N(6)-biotinyl-L-lysyl-[protein] + malonyl-CoA. It participates in lipid metabolism; malonyl-CoA biosynthesis; malonyl-CoA from acetyl-CoA: step 1/1. In terms of biological role, component of the acetyl coenzyme A carboxylase (ACC) complex. Biotin carboxylase (BC) catalyzes the carboxylation of biotin on its carrier protein (BCCP) and then the CO(2) group is transferred by the transcarboxylase to acetyl-CoA to form malonyl-CoA. This Bartonella bacilliformis (strain ATCC 35685 / KC583 / Herrer 020/F12,63) protein is Acetyl-coenzyme A carboxylase carboxyl transferase subunit beta.